The chain runs to 233 residues: Favin (233 aa).

Positions 120 and 122 each coordinate Mn(2+). Ca(2+)-binding residues include Asp-122, Phe-124, Asn-126, and Asp-130. Asp-130 and His-137 together coordinate Mn(2+). Asn-168 carries an N-linked (GlcNAc...) asparagine glycan.

This sequence belongs to the leguminous lectin family. Heterodimer of an alpha and a beta chain.

The chain is Favin from Vicia faba (Broad bean).